The primary structure comprises 109 residues: MSEFKRIPPEHAQALREQGAVVVDIRDQPTYAAGHITGAQHVDNVNIADFIRAADLDAPVIVACYHGNSSQSAAAYLVSQGFSDVYSLDGGFELWRTTYPAEISSGNSQ.

Residues 16–104 (REQGAVVVDI…WRTTYPAEIS (89 aa)) form the Rhodanese domain. The active-site Cysteine persulfide intermediate is Cys-64.

It belongs to the GlpE family.

It localises to the cytoplasm. The catalysed reaction is thiosulfate + hydrogen cyanide = thiocyanate + sulfite + 2 H(+). The enzyme catalyses thiosulfate + [thioredoxin]-dithiol = [thioredoxin]-disulfide + hydrogen sulfide + sulfite + 2 H(+). In terms of biological role, transferase that catalyzes the transfer of sulfur from thiosulfate to thiophilic acceptors such as cyanide or dithiols. May function in a CysM-independent thiosulfate assimilation pathway by catalyzing the conversion of thiosulfate to sulfite, which can then be used for L-cysteine biosynthesis. The polypeptide is Thiosulfate sulfurtransferase GlpE (Pseudomonas fluorescens (strain SBW25)).